Consider the following 399-residue polypeptide: Phosphoglycerate kinase (399 aa).

Residues 21 to 23, R36, 59 to 62, R120, and R158 contribute to the substrate site; these read DFN and HLGR. ATP is bound by residues K209, G297, E328, and 355–358; that span reads GGDS.

Belongs to the phosphoglycerate kinase family. As to quaternary structure, monomer.

It is found in the cytoplasm. It carries out the reaction (2R)-3-phosphoglycerate + ATP = (2R)-3-phospho-glyceroyl phosphate + ADP. The protein operates within carbohydrate degradation; glycolysis; pyruvate from D-glyceraldehyde 3-phosphate: step 2/5. The polypeptide is Phosphoglycerate kinase (Streptococcus thermophilus (strain ATCC BAA-250 / LMG 18311)).